Consider the following 149-residue polypeptide: Arginine repressor (149 aa).

Belongs to the ArgR family.

It localises to the cytoplasm. Its pathway is amino-acid biosynthesis; L-arginine biosynthesis [regulation]. Functionally, regulates arginine biosynthesis genes. This Shouchella clausii (strain KSM-K16) (Alkalihalobacillus clausii) protein is Arginine repressor.